Here is a 463-residue protein sequence, read N- to C-terminus: 4-hydroxybenzoate polyprenyltransferase, mitochondrial (463 aa).

Disordered stretches follow at residues 28–48 and 133–152; these read NNNT…STFN and LLDD…NNKP. The span at 137 to 150 shows a compositional bias: low complexity; the sequence is NNSNSNNNNNSNNN. Helical transmembrane passes span 181-201, 206-226, 257-277, 305-325, 330-350, 375-395, and 431-451; these read IGVW…APAG, LKTM…GCVI, LIFL…SLNY, FVLG…IAGS, IVAP…TIYA, IILS…GIAA, and FISN…SKLL.

It belongs to the UbiA prenyltransferase family. Mg(2+) serves as cofactor.

It is found in the mitochondrion inner membrane. The catalysed reaction is an all-trans-polyprenyl diphosphate + 4-hydroxybenzoate = a 4-hydroxy-3-(all-trans-polyprenyl)benzoate + diphosphate. Its pathway is cofactor biosynthesis; ubiquinone biosynthesis. Its function is as follows. Catalyzes the prenylation of para-hydroxybenzoate (PHB) with an all-trans polyprenyl group. Mediates the second step in the final reaction sequence of coenzyme Q (CoQ) biosynthesis, which is the condensation of the polyisoprenoid side chain with PHB. In terms of biological role, catalyzes the prenylation of para-hydroxybenzoate (PHB) with an all-trans polyprenyl group. Mediates the second step in the final reaction sequence of coenzyme Q (CoQ) biosynthesis, which is the condensation of the polyisoprenoid side chain with PHB, generating the first membrane-bound Q intermediate. The chain is 4-hydroxybenzoate polyprenyltransferase, mitochondrial from Dictyostelium discoideum (Social amoeba).